Consider the following 103-residue polypeptide: ATP-dependent Clp protease adapter protein ClpS (103 aa).

It belongs to the ClpS family. In terms of assembly, binds to the N-terminal domain of the chaperone ClpA.

In terms of biological role, involved in the modulation of the specificity of the ClpAP-mediated ATP-dependent protein degradation. The sequence is that of ATP-dependent Clp protease adapter protein ClpS from Nitrosomonas eutropha (strain DSM 101675 / C91 / Nm57).